The chain runs to 868 residues: Pro-neuregulin-2, membrane-bound isoform (868 aa).

The tract at residues 1-114 is disordered; the sequence is MRQVCCSALP…AAGGMRRDPA (114 aa). Positions 1–127 are excised as a propeptide; that stretch reads MRQVCCSALP…SMLLFGVSLA (127 aa). Residues 19 to 75 show a composition bias toward low complexity; it reads SSYSYSDSSSSSSSNNSSSSTSSRSSSRSSSRSSRGSTTTTSSSENSGSNSGSIFRP. N33 and N34 each carry an N-linked (GlcNAc...) asparagine glycan. Residues 76–90 show a composition bias toward pro residues; sequence AAPPEPRPQPQPQPR. The span at 91–108 shows a compositional bias: low complexity; that stretch reads SPAARRAAARSRAAAAGG. At 128–429 the chain is on the extracellular side; the sequence is CYSPSLKSVQ…KEAEELYQKR (302 aa). N-linked (GlcNAc...) asparagine glycosylation is found at N163, N294, and N362. An Ig-like C2-type domain is found at 253 to 348; it reads PKLKKMKSQT…RGRLHVNSVS (96 aa). Cystine bridges form between C273–C327, C361–C375, C369–C386, and C388–C397. The region spanning 357–398 is the EGF-like domain; the sequence is HARKCNETAKSYCVNGGVCYYIEGINQLSCKCPNGFFGQRCL. Residues 430–450 form a helical membrane-spanning segment; sequence VLTITGICVALLVVGIVCVVA. Residues 451–868 lie on the Cytoplasmic side of the membrane; the sequence is YCKTKKQRRQ…TRAKQDSGPL (418 aa). Disordered stretches follow at residues 469–488, 516–553, 671–690, 720–806, and 823–868; these read MCPA…PRLD, TFSG…SESL, LLRH…DMQR, ASPF…DGAL, and LRSD…SGPL. Residues 518–530 are compositionally biased toward low complexity; sequence SGSHSCSPSHHCS. The span at 538–551 shows a compositional bias: basic and acidic residues; sequence HRHESHTWSLERSE. A compositionally biased stretch (low complexity) spans 766–794; it reads LNGLAAQRARAARDSLSLSSGSGCGSASA.

This sequence belongs to the neuregulin family. As to quaternary structure, interacts with ERBB3 and ERBB4. In terms of processing, proteolytic cleavage close to the plasma membrane on the external face leads to the release of the soluble growth factor form. Post-translationally, extensive glycosylation precedes the proteolytic cleavage. Expressed in most parts of the brain, especially the olfactory bulb and cerebellum where it localizes in granule and Purkinje cells. In the hippocampus, found in the granule cells of the dentate gyrus. In the basal forebrain, found in the cholinergic cells. In the hindbrain, weakly detectable in the motor trigeminal nucleus. Not detected in the hypothalamus. Also found in the liver and in the thymus. Not detected in heart, adrenal gland, or testis.

The protein localises to the cell membrane. It is found in the secreted. Functionally, direct ligand for ERBB3 and ERBB4 tyrosine kinase receptors. Concomitantly recruits ERBB1 and ERBB2 coreceptors, resulting in ligand-stimulated tyrosine phosphorylation and activation of the ERBB receptors. May also promote the heterodimerization with the EGF receptor. This chain is Pro-neuregulin-2, membrane-bound isoform (Nrg2), found in Rattus norvegicus (Rat).